Consider the following 124-residue polypeptide: MNQQELIEEINKIESCSLVFERFFGYLPNDIKERKQYILKFNKTLKDEKRKLKCKKTFKGEKKNKKQTFLKHHQSDDHSENKVYKSKKLEKKIQQLNKKKQLIDTKINFLKEIKESNKINKSKI.

Residues 62–72 show a composition bias toward basic residues; it reads KKNKKQTFLKH. A disordered region spans residues 62–86; it reads KKNKKQTFLKHHQSDDHSENKVYKS. Over residues 73-83 the composition is skewed to basic and acidic residues; the sequence is HQSDDHSENKV. The stretch at 80-112 forms a coiled coil; it reads ENKVYKSKKLEKKIQQLNKKKQLIDTKINFLKE.

This is an uncharacterized protein from Dictyostelium discoideum (Social amoeba).